Reading from the N-terminus, the 268-residue chain is Malonyl-[acyl-carrier protein] O-methyltransferase (268 aa).

This sequence belongs to the methyltransferase superfamily.

The enzyme catalyses malonyl-[ACP] + S-adenosyl-L-methionine = malonyl-[ACP] methyl ester + S-adenosyl-L-homocysteine. It participates in cofactor biosynthesis; biotin biosynthesis. Its function is as follows. Converts the free carboxyl group of a malonyl-thioester to its methyl ester by transfer of a methyl group from S-adenosyl-L-methionine (SAM). It allows to synthesize pimeloyl-ACP via the fatty acid synthetic pathway. This is Malonyl-[acyl-carrier protein] O-methyltransferase from Prosthecochloris aestuarii (strain DSM 271 / SK 413).